Here is a 144-residue protein sequence, read N- to C-terminus: Large ribosomal subunit protein uL15 (144 aa).

The tract at residues 1 to 57 (MKLNDLSPAPGSRREKHRPGRGIGSGLGKTGGRGHKGQSSRSGGTIAPGFEGGQQPL) is disordered. A compositionally biased stretch (gly residues) spans 21–31 (RGIGSGLGKTG).

It belongs to the universal ribosomal protein uL15 family. In terms of assembly, part of the 50S ribosomal subunit.

In terms of biological role, binds to the 23S rRNA. The protein is Large ribosomal subunit protein uL15 of Pseudomonas savastanoi pv. phaseolicola (strain 1448A / Race 6) (Pseudomonas syringae pv. phaseolicola (strain 1448A / Race 6)).